The sequence spans 504 residues: Maturase K (504 aa).

This sequence belongs to the intron maturase 2 family. MatK subfamily.

Its subcellular location is the plastid. The protein resides in the chloroplast. Functionally, usually encoded in the trnK tRNA gene intron. Probably assists in splicing its own and other chloroplast group II introns. The sequence is that of Maturase K from Lablab purpureus (Hyacinth bean).